A 1039-amino-acid chain; its full sequence is FHIP family protein GG24907 (1039 aa).

Phosphoserine is present on residues Ser498 and Ser805. Disordered stretches follow at residues 831-877 (ATPT…SASS), 904-945 (GISQ…SNSS), and 957-984 (SNTT…SEPA). Composition is skewed to polar residues over residues 855-877 (TSMF…SASS) and 904-924 (GISQ…TQPQ). Over residues 925–945 (AGASRTGATATSAAASGSNSS) the composition is skewed to low complexity. Over residues 957 to 966 (SNTTTHSAST) the composition is skewed to polar residues.

It belongs to the FHIP family.

The sequence is that of FHIP family protein GG24907 from Drosophila erecta (Fruit fly).